The sequence spans 347 residues: Phosphoribosylformylglycinamidine cyclo-ligase (347 aa).

Belongs to the AIR synthase family.

The protein resides in the cytoplasm. The catalysed reaction is 2-formamido-N(1)-(5-O-phospho-beta-D-ribosyl)acetamidine + ATP = 5-amino-1-(5-phospho-beta-D-ribosyl)imidazole + ADP + phosphate + H(+). Its pathway is purine metabolism; IMP biosynthesis via de novo pathway; 5-amino-1-(5-phospho-D-ribosyl)imidazole from N(2)-formyl-N(1)-(5-phospho-D-ribosyl)glycinamide: step 2/2. This chain is Phosphoribosylformylglycinamidine cyclo-ligase, found in Yersinia pestis.